The sequence spans 381 residues: L-lactate dehydrogenase (381 aa).

Residues 1-380 (MIISASTDYR…SADSLVRELG (380 aa)) form the FMN hydroxy acid dehydrogenase domain. Tyrosine 24 contributes to the substrate binding site. Serine 106 and glutamine 127 together coordinate FMN. Tyrosine 129 is a substrate binding site. Threonine 155 lines the FMN pocket. Arginine 164 lines the substrate pocket. Residue lysine 251 participates in FMN binding. Histidine 275 (proton acceptor) is an active-site residue. Residue arginine 278 participates in substrate binding. Residue 306-330 (DSGIRTGLDVVRMIALGADSVLLGR) participates in FMN binding.

The protein belongs to the FMN-dependent alpha-hydroxy acid dehydrogenase family. Homotetramer. FMN is required as a cofactor.

The protein localises to the cell inner membrane. It catalyses the reaction (S)-lactate + A = pyruvate + AH2. Catalyzes the conversion of L-lactate to pyruvate. Is coupled to the respiratory chain. The polypeptide is L-lactate dehydrogenase (Pseudomonas aeruginosa (strain LESB58)).